Consider the following 692-residue polypeptide: Glycogen phosphorylase (692 aa).

Lysine 586 carries the post-translational modification N6-(pyridoxal phosphate)lysine.

This sequence belongs to the glycogen phosphorylase family. The cofactor is pyridoxal 5'-phosphate.

It catalyses the reaction [(1-&gt;4)-alpha-D-glucosyl](n) + phosphate = [(1-&gt;4)-alpha-D-glucosyl](n-1) + alpha-D-glucose 1-phosphate. Its function is as follows. Phosphorylase is an important allosteric enzyme in carbohydrate metabolism. Enzymes from different sources differ in their regulatory mechanisms and in their natural substrates. However, all known phosphorylases share catalytic and structural properties. In Aquifex aeolicus (strain VF5), this protein is Glycogen phosphorylase (glgP).